The sequence spans 339 residues: Phosphoribosylformylglycinamidine cyclo-ligase (339 aa).

This sequence belongs to the AIR synthase family.

The protein localises to the cytoplasm. It catalyses the reaction 2-formamido-N(1)-(5-O-phospho-beta-D-ribosyl)acetamidine + ATP = 5-amino-1-(5-phospho-beta-D-ribosyl)imidazole + ADP + phosphate + H(+). The protein operates within purine metabolism; IMP biosynthesis via de novo pathway; 5-amino-1-(5-phospho-D-ribosyl)imidazole from N(2)-formyl-N(1)-(5-phospho-D-ribosyl)glycinamide: step 2/2. This is Phosphoribosylformylglycinamidine cyclo-ligase from Streptococcus thermophilus (strain ATCC BAA-250 / LMG 18311).